The chain runs to 257 residues: Beta-fibrinogenase (257 aa).

The first 18 residues, 1-18 (MVLIRVLANLLLLQLSHA), serve as a signal peptide directing secretion. Positions 19–24 (QKSSEL) are excised as a propeptide. In terms of domain architecture, Peptidase S1 spans 25–248 (VVGGDECNIN…YTDWIQSIIA (224 aa)). Cystine bridges form between C31-C162, C49-C65, C97-C255, C141-C209, C173-C188, and C199-C224. N44 carries an N-linked (GlcNAc...) asparagine glycan. The Charge relay system role is filled by H64. N78 and N102 each carry an N-linked (GlcNAc...) asparagine glycan. The active-site Charge relay system is the D109. N153 and N169 each carry an N-linked (GlcNAc...) asparagine glycan. The active-site Charge relay system is the S203. An N-linked (GlcNAc...) asparagine glycan is attached at N250.

Monomer. In terms of processing, glycosylated. Contains 23.0% of hexoses, 8.3% of hexosamines and 1.0% of sialic acids. Expressed by the venom gland.

The protein localises to the secreted. With respect to regulation, inhibited by diisopropylfluorophosphate (DFP) and PMSF. Its function is as follows. Snake venom serine protease that has fibrinogenolytic activities by hydrolyzing the beta chain of fibrinogen (FGB). Typical arginine esterase which hydrolyzes esters and amides of arginine. The protein is Beta-fibrinogenase of Macrovipera lebetinus (Levantine viper).